We begin with the raw amino-acid sequence, 258 residues long: Protein OS-9 homolog (258 aa).

A signal peptide spans 1 to 18 (MNWTSLVYLWFIFKSIFA). N-linked (GlcNAc...) asparagine glycosylation is found at N2, N51, and N70. Positions 114-237 (TSCVFSFNLH…HINVPKLCSL (124 aa)) constitute an MRH domain. Residues C116 and C132 are joined by a disulfide bond. A mannooligosaccharide derivative is bound by residues W127 and Q139. N-linked (GlcNAc...) asparagine glycosylation is present at N165. Disulfide bonds link C193–C223 and C208–C235. The a mannooligosaccharide derivative site is built by D194, R200, E219, and Y225.

Belongs to the OS-9 family. As to quaternary structure, interacts with missfolded ER lumenal proteins.

It is found in the endoplasmic reticulum membrane. Its function is as follows. Lectin involved in the quality control of the secretory pathway. As a member of the endoplasmic reticulum-associated degradation lumenal (ERAD-L) surveillance system, targets misfolded endoplasmic reticulum lumenal glycoproteins for degradation. The sequence is that of Protein OS-9 homolog (YOS9) from Candida albicans (strain SC5314 / ATCC MYA-2876) (Yeast).